Here is a 359-residue protein sequence, read N- to C-terminus: UDP-N-acetylglucosamine--N-acetylmuramyl-(pentapeptide) pyrophosphoryl-undecaprenol N-acetylglucosamine transferase (359 aa).

UDP-N-acetyl-alpha-D-glucosamine contacts are provided by residues 15–17 (SGG), asparagine 127, arginine 164, serine 192, isoleucine 246, 265–270 (ALTVSE), and glutamine 290.

The protein belongs to the glycosyltransferase 28 family. MurG subfamily.

The protein resides in the cell membrane. The enzyme catalyses di-trans,octa-cis-undecaprenyl diphospho-N-acetyl-alpha-D-muramoyl-L-alanyl-D-glutamyl-meso-2,6-diaminopimeloyl-D-alanyl-D-alanine + UDP-N-acetyl-alpha-D-glucosamine = di-trans,octa-cis-undecaprenyl diphospho-[N-acetyl-alpha-D-glucosaminyl-(1-&gt;4)]-N-acetyl-alpha-D-muramoyl-L-alanyl-D-glutamyl-meso-2,6-diaminopimeloyl-D-alanyl-D-alanine + UDP + H(+). The protein operates within cell wall biogenesis; peptidoglycan biosynthesis. In terms of biological role, cell wall formation. Catalyzes the transfer of a GlcNAc subunit on undecaprenyl-pyrophosphoryl-MurNAc-pentapeptide (lipid intermediate I) to form undecaprenyl-pyrophosphoryl-MurNAc-(pentapeptide)GlcNAc (lipid intermediate II). This is UDP-N-acetylglucosamine--N-acetylmuramyl-(pentapeptide) pyrophosphoryl-undecaprenol N-acetylglucosamine transferase from Wigglesworthia glossinidia brevipalpis.